An 885-amino-acid polypeptide reads, in one-letter code: Cytosolic carboxypeptidase-like protein 5 (885 aa).

Residues 150 to 576 (YPFSYAECQD…AVAVAALDMA (427 aa)) form the Peptidase M14 domain. Positions 247 and 250 each coordinate Zn(2+). 2 disordered regions span residues 341 to 364 (SGSALKTSNQSNTSPPVATPTERE) and 392 to 428 (ESWEKSGVQREAEHSDENESAQSRGETNSAPSEQVPP). Residues 344 to 356 (ALKTSNQSNTSPP) are compositionally biased toward polar residues. Positions 393-408 (SWEKSGVQREAEHSDE) are enriched in basic and acidic residues. Residues 411–428 (SAQSRGETNSAPSEQVPP) are compositionally biased toward polar residues. His440 provides a ligand contact to Zn(2+). The active-site Proton donor/acceptor is the Glu522. Positions 606–668 (STGLTSNNRR…KSSPSFTFGT (63 aa)) are enriched in polar residues. Disordered regions lie at residues 606 to 788 (STGL…RTAL) and 866 to 885 (ALLKNSSRQTDQHIHRSLPT). Positions 682–691 (RECKAQEKRR) are enriched in basic and acidic residues. Positions 712 to 749 (LSAPVRAPLSPSSSSSSSSSSPSSSSSAPGPGSISLAG) are enriched in low complexity.

Belongs to the peptidase M14 family. Requires Zn(2+) as cofactor.

It is found in the cytoplasm. The protein localises to the cytosol. It localises to the nucleus. The protein resides in the cytoskeleton. Its subcellular location is the spindle. It is found in the midbody. It carries out the reaction gamma-L-glutamyl-L-glutamyl-[protein] + H2O = L-glutamyl-[protein] + L-glutamate. The enzyme catalyses (L-glutamyl)(n+1)-gamma-L-glutamyl-L-glutamyl-[protein] + H2O = (L-glutamyl)(n)-gamma-L-glutamyl-L-glutamyl-[protein] + L-glutamate. The catalysed reaction is C-terminal L-alpha-aminoacyl-L-glutamyl-[tubulin] + H2O = C-terminal L-alpha-aminoacyl-[tubulin] + L-glutamate. It catalyses the reaction C-terminal L-alpha-aminoacyl-L-glutamyl-L-glutamyl-[tubulin] + H2O = C-terminal L-alpha-aminoacyl-L-glutamyl-[tubulin] + L-glutamate. Its function is as follows. Metallocarboxypeptidase that mediates deglutamylation of tubulin and non-tubulin target proteins. Catalyzes the removal of polyglutamate side chains present on the gamma-carboxyl group of glutamate residues within the C-terminal tail of alpha- and beta-tubulin. Cleaves alpha- and gamma-linked polyglutamate tubulin side-chain, as well as the branching point glutamate. Also catalyzes the removal of alpha-linked glutamate residues from the carboxy-terminus of alpha-tubulin. This Danio rerio (Zebrafish) protein is Cytosolic carboxypeptidase-like protein 5 (agbl5).